The sequence spans 754 residues: Lysyl oxidase homolog 3 (754 aa).

The first 26 residues, methionine 1–glycine 26, serve as a signal peptide directing secretion. 4 SRCR domains span residues phenylalanine 45–lysine 146, valine 170–valine 283, valine 308–asparagine 408, and isoleucine 418–serine 526. Intrachain disulfides connect cysteine 71–cysteine 135, cysteine 84–cysteine 145, cysteine 115–cysteine 125, cysteine 202–cysteine 272, cysteine 215–cysteine 282, cysteine 249–cysteine 259, cysteine 333–cysteine 397, cysteine 346–cysteine 407, cysteine 377–cysteine 387, cysteine 447–cysteine 512, cysteine 460–cysteine 525, cysteine 493–cysteine 503, cysteine 555–cysteine 561, cysteine 607–cysteine 655, cysteine 639–cysteine 645, cysteine 667–cysteine 677, and cysteine 714–cysteine 728. N-linked (GlcNAc...) asparagine glycosylation is present at asparagine 112. An N-linked (GlcNAc...) asparagine glycan is attached at asparagine 267. N-linked (GlcNAc...) asparagine glycans are attached at residues asparagine 391 and asparagine 482. The interval serine 530–alanine 733 is lysyl-oxidase like. 3 residues coordinate Cu cation: histidine 608, histidine 610, and histidine 612. A glycan (N-linked (GlcNAc...) asparagine) is linked at asparagine 626. A cross-link (lysine tyrosylquinone (Lys-Tyr)) is located at residues lysine 635–tyrosine 671. Tyrosine 671 is modified (2',4',5'-topaquinone).

This sequence belongs to the lysyl oxidase family. Requires Cu cation as cofactor. Lysine tyrosylquinone residue serves as cofactor. The lysine tyrosylquinone cross-link (LTQ) is generated by condensation of the epsilon-amino group of a lysine with a topaquinone produced by oxidation of tyrosine. In terms of tissue distribution, expressed in palate: predominantly present in the palate mesenchyme and tongue (at protein level). In spine, expressed in the original intervertebral disk, cartilage primordia, anterior and posterior longitudinal ligaments, meninges of spinal cord, lung and heart. In eyes, strongly expressed in the skin of the eyelid and weakly expressed in the cornea and sclera. In lung, predominantly expressed in the pulmonary mesenchyme. In developing muscle, expressed at myofiber ends (at protein level).

The protein resides in the secreted. Its subcellular location is the extracellular space. It localises to the cytoplasm. The protein localises to the nucleus. The catalysed reaction is L-lysyl-[protein] + O2 + H2O = (S)-2-amino-6-oxohexanoyl-[protein] + H2O2 + NH4(+). It catalyses the reaction N(6)-acetyl-L-lysyl-[protein] + O2 + H2O = acetamide + (S)-2-amino-6-oxohexanoyl-[protein] + H2O2. Its function is as follows. Protein-lysine 6-oxidase that mediates the oxidation of peptidyl lysine residues to allysine in target proteins. Catalyzes the post-translational oxidative deamination of peptidyl lysine residues in precursors of elastin and different types of collagens, a prerequisite in the formation of cross-links between collagens and elastin. Required for somite boundary formation by catalyzing oxidation of fibronectin (FN1), enhancing integrin signaling in myofibers and their adhesion to the myotendinous junction (MTJ). Acts as a regulator of inflammatory response by inhibiting differentiation of naive CD4(+) T-cells into T-helper Th17 or regulatory T-cells (Treg): acts by interacting with STAT3 in the nucleus and catalyzing both deacetylation and oxidation of lysine residues on STAT3, leading to disrupt STAT3 dimerization and inhibit STAT3 transcription activity. Oxidation of lysine residues to allysine on STAT3 preferentially takes place on lysine residues that are acetylated. Also able to catalyze deacetylation of lysine residues on STAT3. This chain is Lysyl oxidase homolog 3, found in Mus musculus (Mouse).